The primary structure comprises 123 residues: Photosystem II extrinsic protein U (123 aa).

The signal sequence occupies residues 1-28 (MKTLARILVVFTLIVGLIGFFNPLPAQA).

The protein belongs to the PsbU family. In terms of assembly, PSII is composed of 1 copy each of membrane proteins PsbA, PsbB, PsbC, PsbD, PsbE, PsbF, PsbH, PsbI, PsbJ, PsbK, PsbL, PsbM, PsbT, PsbX, PsbY, PsbZ, Psb30/Ycf12, peripheral proteins PsbO, CyanoQ (PsbQ), PsbU, PsbV and a large number of cofactors. It forms dimeric complexes.

The protein resides in the cellular thylakoid membrane. Functionally, one of the extrinsic, lumenal subunits of photosystem II (PSII). PSII is a light-driven water plastoquinone oxidoreductase, using light energy to abstract electrons from H(2)O, generating a proton gradient subsequently used for ATP formation. The extrinsic proteins stabilize the structure of photosystem II oxygen-evolving complex (OEC), the ion environment of oxygen evolution and protect the OEC against heat-induced inactivation. This chain is Photosystem II extrinsic protein U, found in Gloeothece citriformis (strain PCC 7424) (Cyanothece sp. (strain PCC 7424)).